We begin with the raw amino-acid sequence, 324 residues long: Aspartate carbamoyltransferase catalytic subunit (324 aa).

Positions 65 and 66 each coordinate carbamoyl phosphate. K93 contacts L-aspartate. Carbamoyl phosphate is bound by residues R115, H145, and Q148. L-aspartate is bound by residues R178 and R233. G274 and P275 together coordinate carbamoyl phosphate.

It belongs to the aspartate/ornithine carbamoyltransferase superfamily. ATCase family. In terms of assembly, heterododecamer (2C3:3R2) of six catalytic PyrB chains organized as two trimers (C3), and six regulatory PyrI chains organized as three dimers (R2).

The enzyme catalyses carbamoyl phosphate + L-aspartate = N-carbamoyl-L-aspartate + phosphate + H(+). It participates in pyrimidine metabolism; UMP biosynthesis via de novo pathway; (S)-dihydroorotate from bicarbonate: step 2/3. In terms of biological role, catalyzes the condensation of carbamoyl phosphate and aspartate to form carbamoyl aspartate and inorganic phosphate, the committed step in the de novo pyrimidine nucleotide biosynthesis pathway. The chain is Aspartate carbamoyltransferase catalytic subunit from Nitrosococcus oceani (strain ATCC 19707 / BCRC 17464 / JCM 30415 / NCIMB 11848 / C-107).